Consider the following 573-residue polypeptide: Probable D-xylulose kinase A (573 aa).

Positions 97, 168, 284, and 285 each coordinate substrate. Residues Trp366, 471–472 (GG), and Asn475 each bind ATP.

Belongs to the FGGY kinase family.

It localises to the cytoplasm. It catalyses the reaction D-xylulose + ATP = D-xylulose 5-phosphate + ADP + H(+). In terms of biological role, highly specific D-xylulose kinase which participates in the catabolism of xylose. Xylose is a major component of hemicelluloses such as xylan. Most fungi utilize D-xylose via three enzymatic reactions, xylose reductase (XR), xylitol dehydrogenase (XDH), and xylulokinase, to form xylulose 5-phosphate, which enters pentose phosphate pathway. The polypeptide is Probable D-xylulose kinase A (xkiA) (Aspergillus fumigatus (strain ATCC MYA-4609 / CBS 101355 / FGSC A1100 / Af293) (Neosartorya fumigata)).